We begin with the raw amino-acid sequence, 108 residues long: Nucleoid-associated protein PLES_37951 (108 aa).

Disordered stretches follow at residues 1–25 (MMKGGMAGLMKQAQQMQEKMQKMQE) and 87–108 (NQEKMSGFTSGMQLPPGFKMPF). Polar residues predominate over residues 87 to 98 (NQEKMSGFTSGM).

It belongs to the YbaB/EbfC family. In terms of assembly, homodimer.

Its subcellular location is the cytoplasm. The protein resides in the nucleoid. Its function is as follows. Binds to DNA and alters its conformation. May be involved in regulation of gene expression, nucleoid organization and DNA protection. This Pseudomonas aeruginosa (strain LESB58) protein is Nucleoid-associated protein PLES_37951.